The chain runs to 523 residues: 2-hydroxyisoflavanone synthase (523 aa).

A helical membrane pass occupies residues 2–22; it reads LVELAITLLVIALFIHLRPTL. Cys450 serves as a coordination point for heme.

Belongs to the cytochrome P450 family. Heme is required as a cofactor.

The protein resides in the microsome membrane. The enzyme catalyses (2S)-liquiritigenin + reduced [NADPH--hemoprotein reductase] + O2 = (2R,3S)-2,4',7-trihydroxyisoflavanone + oxidized [NADPH--hemoprotein reductase] + H2O + H(+). The catalysed reaction is (2S)-naringenin + reduced [NADPH--hemoprotein reductase] + O2 = 2-hydroxy-2,3-dihydrogenistein + oxidized [NADPH--hemoprotein reductase] + H2O + H(+). 2-hydroxyisoflavanone synthase, which catalyzes the hydroxylation associated with 1,2-aryl migration of flavanones. Converts liquiritigenin and naringenin into highly unstable precursors of the isoflavones daidzein and genistein. Acts only on substrates with (2S)-chirality. This chain is 2-hydroxyisoflavanone synthase (CYP93C2), found in Glycyrrhiza echinata (Licorice).